The primary structure comprises 184 residues: Effector CFEM1 (184 aa).

Positions 1–17 (MKYSVAFVALAAVAAQA) are cleaved as a signal peptide. The CFEM domain maps to 18 to 112 (QSLADVPKCA…PTTTAAATST (95 aa)). Intrachain disulfides connect Cys26–Cys68, Cys30–Cys63, Cys41–Cys48, and Cys50–Cys85. Residue Asp45 participates in heme binding. Disordered regions lie at residues 83–106 (NLCKNPPKESEAKSTAEEEKPTTT) and 136–163 (IIPTTAAEEPATSTPAAATPTKGPEQAN). The span at 88–103 (PPKESEAKSTAEEEKP) shows a compositional bias: basic and acidic residues. Residue Asn163 is the site of GPI-anchor amidated asparagine attachment. Positions 164–184 (GAAGLKGLGALAMAAFAALAL) are cleaved as a propeptide — removed in mature form.

Belongs to the RBT5 family. As to quaternary structure, interacts with Z.mays LRR5; the interaction is direct. Interacts (via CFEM domain) with Z.mays WAK17 isoform 2; the interaction is direct.

The protein resides in the secreted. It localises to the cell wall. Its subcellular location is the cell membrane. The protein localises to the cell septum. It is found in the cytoplasm. Suppresses host programmed cell death during infection by binding to Z.mays WAK17 isoform 2 and Z.mays LRR5, to prevent activation of Z.mays WAK17 isoform 1 and the downstream hypersensitive response. This chain is Effector CFEM1, found in Gibberella zeae (strain ATCC MYA-4620 / CBS 123657 / FGSC 9075 / NRRL 31084 / PH-1) (Wheat head blight fungus).